The following is a 932-amino-acid chain: uncharacterized protein (932 aa).

5 disordered regions span residues 26-120 (NINN…NMLT), 158-289 (MGIG…EEKK), 304-617 (NNNN…INHD), 635-720 (QQSQ…PPLV), and 802-863 (SVSS…FPLE). 2 stretches are compositionally biased toward low complexity: residues 41-105 (NNNI…IISS) and 163-241 (NNNN…YGNN). The segment covering 242-253 (TPVNYIHNNSTP) has biased composition (polar residues). Residues 265–285 (SDEEDSVLYSSDDSEESDYEE) are compositionally biased toward acidic residues. The segment covering 304–475 (NNNNINNNNM…NNNNNNNNNN (172 aa)) has biased composition (low complexity). Composition is skewed to polar residues over residues 476 to 492 (ENYV…NTES) and 527 to 540 (DIPN…TKQQ). Residues 548 to 590 (SPVYSPPNNLSPLSSPYLHHNSNNNSNNGGGNSNNNNTNFNYG) are compositionally biased toward low complexity. Basic and acidic residues predominate over residues 606–617 (GERDPPHVINHD). Composition is skewed to low complexity over residues 635–666 (QQSQ…PSSS), 696–707 (SPPNTSISSLSS), and 813–853 (NSSN…NNNS). A compositionally biased stretch (basic and acidic residues) spans 854-863 (EPKKPKFPLE).

This is an uncharacterized protein from Dictyostelium discoideum (Social amoeba).